Here is a 126-residue protein sequence, read N- to C-terminus: Aspartate 1-decarboxylase (126 aa).

S25 acts as the Schiff-base intermediate with substrate; via pyruvic acid in catalysis. S25 is subject to Pyruvic acid (Ser). T57 is a binding site for substrate. Y58 functions as the Proton donor in the catalytic mechanism. Substrate is bound at residue 72–74 (GAT).

This sequence belongs to the PanD family. Heterooctamer of four alpha and four beta subunits. The cofactor is pyruvate. In terms of processing, is synthesized initially as an inactive proenzyme, which is activated by self-cleavage at a specific serine bond to produce a beta-subunit with a hydroxyl group at its C-terminus and an alpha-subunit with a pyruvoyl group at its N-terminus.

The protein localises to the cytoplasm. It carries out the reaction L-aspartate + H(+) = beta-alanine + CO2. It functions in the pathway cofactor biosynthesis; (R)-pantothenate biosynthesis; beta-alanine from L-aspartate: step 1/1. In terms of biological role, catalyzes the pyruvoyl-dependent decarboxylation of aspartate to produce beta-alanine. The protein is Aspartate 1-decarboxylase of Campylobacter jejuni subsp. doylei (strain ATCC BAA-1458 / RM4099 / 269.97).